A 137-amino-acid polypeptide reads, in one-letter code: Actin-depolymerizing factor 2 (137 aa).

The ADF-H domain maps to 5-137; that stretch reads ASGMAVHDDC…GLDVFKSRTN (133 aa). Position 6 is a phosphoserine (S6).

Belongs to the actin-binding proteins ADF family. In terms of assembly, interacts with AIP1-1.

The protein localises to the cytoplasm. It is found in the cytoskeleton. Functionally, actin-depolymerizing protein. Severs actin filaments (F-actin) and binds to actin monomers. Required for normal cell growth, plant development, cell organ expansion and flowering. Essential for root-knot nematode infection. The sequence is that of Actin-depolymerizing factor 2 (ADF2) from Arabidopsis thaliana (Mouse-ear cress).